A 345-amino-acid polypeptide reads, in one-letter code: Acetylserotonin O-methyltransferase (345 aa).

Residues tyrosine 147, tryptophan 164, aspartate 210, 235-237 (GDF), and arginine 252 each bind S-adenosyl-L-methionine. Histidine 255 (proton donor/acceptor) is an active-site residue. Aspartate 256, asparagine 302, and glutamine 306 together coordinate substrate.

This sequence belongs to the class I-like SAM-binding methyltransferase superfamily. Cation-independent O-methyltransferase family. In terms of assembly, homodimer. As to expression, expressed in the pineal gland (at protein level). Not detectable in retina, nor in liver.

The enzyme catalyses N-acetylserotonin + S-adenosyl-L-methionine = melatonin + S-adenosyl-L-homocysteine + H(+). Its pathway is aromatic compound metabolism; melatonin biosynthesis; melatonin from serotonin: step 1/2. In terms of biological role, catalyzes the transfer of a methyl group onto N-acetylserotonin, producing melatonin (N-acetyl-5-methoxytryptamine). The sequence is that of Acetylserotonin O-methyltransferase (ASMT) from Bos taurus (Bovine).